Consider the following 597-residue polypeptide: Lipoprotein LpqB (597 aa).

The N-terminal stretch at 1–28 is a signal peptide; sequence MTPGSRSAMRSRSVCGAIALAVLVTVSG. C29 is lipidated: N-palmitoyl cysteine. A lipid anchor (S-diacylglycerol cysteine) is attached at C29. Positions 39 to 51 are enriched in polar residues; that stretch reads QAIGTINRDSPGS. A disordered region spans residues 39–59; that stretch reads QAIGTINRDSPGSSVAAPAPG.

The protein belongs to the LpqB lipoprotein family.

The protein resides in the cell membrane. The sequence is that of Lipoprotein LpqB from Rhodococcus opacus (strain B4).